We begin with the raw amino-acid sequence, 365 residues long: 25S rRNA (uridine(2843)-N(3))-methyltransferase (365 aa).

This sequence belongs to the class I-like SAM-binding methyltransferase superfamily.

It is found in the cytoplasm. The protein localises to the nucleus. It carries out the reaction uridine(2843) in 25S rRNA + S-adenosyl-L-methionine = N(3)-methyluridine(2843) in 25S rRNA + S-adenosyl-L-homocysteine + H(+). S-adenosyl-L-methionine-dependent methyltransferase that specifically methylates the N(3) position of uridine 2843 (m3U2843) in 25S rRNA. This is 25S rRNA (uridine(2843)-N(3))-methyltransferase (BMT6) from Saccharomyces cerevisiae (strain ATCC 204508 / S288c) (Baker's yeast).